The chain runs to 530 residues: Synembryn-like chaperone C3E7.04c (530 aa).

Residues 492–512 form a helical membrane-spanning segment; it reads SFIYHCYHSFVGPIHILLLMF.

The protein belongs to the synembryn family.

The protein localises to the membrane. Functionally, chaperone that specifically binds and folds some, but not all, nascent G alpha proteins prior to G protein heterotrimer formation, promoting their stability and activity. Also acts as a guanine nucleotide exchange factor (GEF) for G alpha proteins by stimulating exchange of bound GDP for free GTP. The protein is Synembryn-like chaperone C3E7.04c of Schizosaccharomyces pombe (strain 972 / ATCC 24843) (Fission yeast).